We begin with the raw amino-acid sequence, 237 residues long: Ribosomal RNA small subunit methyltransferase G (237 aa).

S-adenosyl-L-methionine contacts are provided by residues glycine 78, phenylalanine 83, 129–130, and arginine 148; that span reads AE. A disordered region spans residues 216–237; it reads SKKKETPNKYPRKAGTPNKKPL.

Belongs to the methyltransferase superfamily. RNA methyltransferase RsmG family.

It localises to the cytoplasm. Functionally, specifically methylates the N7 position of a guanine in 16S rRNA. The chain is Ribosomal RNA small subunit methyltransferase G from Streptococcus agalactiae serotype V (strain ATCC BAA-611 / 2603 V/R).